Here is a 227-residue protein sequence, read N- to C-terminus: Phosphoribosylformylglycinamidine synthase subunit PurQ (227 aa).

The 225-residue stretch at 2–226 (KFAVIQFPGS…VKAWKEEQVN (225 aa)) folds into the Glutamine amidotransferase type-1 domain. Cys86 acts as the Nucleophile in catalysis. Active-site residues include His195 and Glu197.

Part of the FGAM synthase complex composed of 1 PurL, 1 PurQ and 2 PurS subunits.

The protein resides in the cytoplasm. The catalysed reaction is N(2)-formyl-N(1)-(5-phospho-beta-D-ribosyl)glycinamide + L-glutamine + ATP + H2O = 2-formamido-N(1)-(5-O-phospho-beta-D-ribosyl)acetamidine + L-glutamate + ADP + phosphate + H(+). It catalyses the reaction L-glutamine + H2O = L-glutamate + NH4(+). It participates in purine metabolism; IMP biosynthesis via de novo pathway; 5-amino-1-(5-phospho-D-ribosyl)imidazole from N(2)-formyl-N(1)-(5-phospho-D-ribosyl)glycinamide: step 1/2. Part of the phosphoribosylformylglycinamidine synthase complex involved in the purines biosynthetic pathway. Catalyzes the ATP-dependent conversion of formylglycinamide ribonucleotide (FGAR) and glutamine to yield formylglycinamidine ribonucleotide (FGAM) and glutamate. The FGAM synthase complex is composed of three subunits. PurQ produces an ammonia molecule by converting glutamine to glutamate. PurL transfers the ammonia molecule to FGAR to form FGAM in an ATP-dependent manner. PurS interacts with PurQ and PurL and is thought to assist in the transfer of the ammonia molecule from PurQ to PurL. The sequence is that of Phosphoribosylformylglycinamidine synthase subunit PurQ from Listeria monocytogenes serotype 4a (strain HCC23).